The primary structure comprises 84 residues: UPF0320 protein YNR077C (84 aa).

The protein belongs to the UPF0320 family.

The polypeptide is UPF0320 protein YNR077C (Saccharomyces cerevisiae (strain ATCC 204508 / S288c) (Baker's yeast)).